Reading from the N-terminus, the 32-residue chain is Cytochrome b6-f complex subunit 7 (32 aa).

Residues 5 to 25 (FIASASISFIITLIGLTLGFA) traverse the membrane as a helical segment.

Belongs to the PetM family. In terms of assembly, the 4 large subunits of the cytochrome b6-f complex are cytochrome b6, subunit IV (17 kDa polypeptide, PetD), cytochrome f and the Rieske protein, while the 4 small subunits are PetG, PetL, PetM and PetN. The complex functions as a dimer.

It is found in the plastid. It localises to the chloroplast thylakoid membrane. Functionally, component of the cytochrome b6-f complex, which mediates electron transfer between photosystem II (PSII) and photosystem I (PSI), cyclic electron flow around PSI, and state transitions. The protein is Cytochrome b6-f complex subunit 7 of Guillardia theta (Cryptophyte).